We begin with the raw amino-acid sequence, 232 residues long: 2,3,4,5-tetrahydropyridine-2,6-dicarboxylate N-acetyltransferase (232 aa).

This sequence belongs to the transferase hexapeptide repeat family. DapH subfamily.

The catalysed reaction is (S)-2,3,4,5-tetrahydrodipicolinate + acetyl-CoA + H2O = L-2-acetamido-6-oxoheptanedioate + CoA. The protein operates within amino-acid biosynthesis; L-lysine biosynthesis via DAP pathway; LL-2,6-diaminopimelate from (S)-tetrahydrodipicolinate (acetylase route): step 1/3. Functionally, catalyzes the transfer of an acetyl group from acetyl-CoA to tetrahydrodipicolinate. In Streptococcus sanguinis (strain SK36), this protein is 2,3,4,5-tetrahydropyridine-2,6-dicarboxylate N-acetyltransferase.